The primary structure comprises 40 residues: Peroxisomal LYS1 stabilizing protein 1 (40 aa).

Residues 1–10 (MTAKTKQSWN) are compositionally biased toward polar residues. The disordered stretch occupies residues 1 to 20 (MTAKTKQSWNKGIWENGKQG).

Its subcellular location is the cytoplasm. The protein resides in the cytosol. It is found in the peroxisome matrix. In terms of biological role, modulates the lysine biosynthesis pathway, possibly by stabilizing the lysine biosynthesis LYS1 protein in lysine-deplete conditions. This is Peroxisomal LYS1 stabilizing protein 1 from Saccharomyces cerevisiae (strain ATCC 204508 / S288c) (Baker's yeast).